We begin with the raw amino-acid sequence, 418 residues long: Thermolabile hemolysin (418 aa).

Residues 1 to 19 (MMKKTITLLTALLPLASAV) form the signal peptide. S153 (nucleophile) is an active-site residue. Active-site residues include D390 and H393.

This sequence belongs to the 'GDSL' lipolytic enzyme family. Post-translationally, there are two forms of LDH. The LDH(S) may be a protein in which 13 residues of the N-terminal of LDH(L) are deleted.

The protein resides in the secreted. Phospholipase hydrolyzing both fatty acid esters of phospholipid, i.e. it hydrolyzes phosphatidylcholine (PC) to lysophosphatidylcholine (LPC) and then LPC to glycerophosphorylcholine (GPC). This chain is Thermolabile hemolysin, found in Vibrio parahaemolyticus serotype O3:K6 (strain RIMD 2210633).